A 336-amino-acid polypeptide reads, in one-letter code: Tryptophan--tRNA ligase (336 aa).

ATP-binding positions include 15–17 and 24–25; these read QPT and GN. Positions 16–25 match the 'HIGH' region motif; sequence PTSDSLHLGN. Residue D141 coordinates L-tryptophan. Residues 153–155, I192, and 201–205 contribute to the ATP site; these read GED and KMSKS. Residues 201-205 carry the 'KMSKS' region motif; that stretch reads KMSKS.

It belongs to the class-I aminoacyl-tRNA synthetase family. Homodimer.

The protein localises to the cytoplasm. It carries out the reaction tRNA(Trp) + L-tryptophan + ATP = L-tryptophyl-tRNA(Trp) + AMP + diphosphate + H(+). Its function is as follows. Catalyzes the attachment of tryptophan to tRNA(Trp). In Mycobacterium tuberculosis (strain CDC 1551 / Oshkosh), this protein is Tryptophan--tRNA ligase.